A 304-amino-acid chain; its full sequence is Acetyl-coenzyme A carboxylase carboxyl transferase subunit beta (304 aa).

Residues valine 26–asparagine 295 enclose the CoA carboxyltransferase N-terminal domain. Zn(2+)-binding residues include cysteine 30, cysteine 33, cysteine 49, and cysteine 52. The C4-type zinc finger occupies cysteine 30 to cysteine 52. The interval serine 281–glutamate 304 is disordered.

The protein belongs to the AccD/PCCB family. Acetyl-CoA carboxylase is a heterohexamer composed of biotin carboxyl carrier protein (AccB), biotin carboxylase (AccC) and two subunits each of ACCase subunit alpha (AccA) and ACCase subunit beta (AccD). Requires Zn(2+) as cofactor.

The protein resides in the cytoplasm. The catalysed reaction is N(6)-carboxybiotinyl-L-lysyl-[protein] + acetyl-CoA = N(6)-biotinyl-L-lysyl-[protein] + malonyl-CoA. Its pathway is lipid metabolism; malonyl-CoA biosynthesis; malonyl-CoA from acetyl-CoA: step 1/1. In terms of biological role, component of the acetyl coenzyme A carboxylase (ACC) complex. Biotin carboxylase (BC) catalyzes the carboxylation of biotin on its carrier protein (BCCP) and then the CO(2) group is transferred by the transcarboxylase to acetyl-CoA to form malonyl-CoA. This is Acetyl-coenzyme A carboxylase carboxyl transferase subunit beta from Pasteurella multocida (strain Pm70).